A 100-amino-acid polypeptide reads, in one-letter code: NADH-quinone oxidoreductase subunit K (100 aa).

3 helical membrane-spanning segments follow: residues 4–24 (LQHG…GLII), 29–49 (LFML…FVVV), and 60–80 (VMFI…LALL).

This sequence belongs to the complex I subunit 4L family. As to quaternary structure, NDH-1 is composed of 13 different subunits. Subunits NuoA, H, J, K, L, M, N constitute the membrane sector of the complex.

It localises to the cell inner membrane. It carries out the reaction a quinone + NADH + 5 H(+)(in) = a quinol + NAD(+) + 4 H(+)(out). In terms of biological role, NDH-1 shuttles electrons from NADH, via FMN and iron-sulfur (Fe-S) centers, to quinones in the respiratory chain. The immediate electron acceptor for the enzyme in this species is believed to be ubiquinone. Couples the redox reaction to proton translocation (for every two electrons transferred, four hydrogen ions are translocated across the cytoplasmic membrane), and thus conserves the redox energy in a proton gradient. The polypeptide is NADH-quinone oxidoreductase subunit K (Photorhabdus laumondii subsp. laumondii (strain DSM 15139 / CIP 105565 / TT01) (Photorhabdus luminescens subsp. laumondii)).